We begin with the raw amino-acid sequence, 474 residues long: Methylenetetrahydrofolate--tRNA-(uracil-5-)-methyltransferase TrmFO (474 aa).

Gly9–Gly14 is an FAD binding site. The interval Pro425–Ala451 is disordered. Over residues Arg429–Ala451 the composition is skewed to basic and acidic residues.

It belongs to the MnmG family. TrmFO subfamily. It depends on FAD as a cofactor.

Its subcellular location is the cytoplasm. It catalyses the reaction uridine(54) in tRNA + (6R)-5,10-methylene-5,6,7,8-tetrahydrofolate + NADH + H(+) = 5-methyluridine(54) in tRNA + (6S)-5,6,7,8-tetrahydrofolate + NAD(+). The catalysed reaction is uridine(54) in tRNA + (6R)-5,10-methylene-5,6,7,8-tetrahydrofolate + NADPH + H(+) = 5-methyluridine(54) in tRNA + (6S)-5,6,7,8-tetrahydrofolate + NADP(+). Its function is as follows. Catalyzes the folate-dependent formation of 5-methyl-uridine at position 54 (M-5-U54) in all tRNAs. The polypeptide is Methylenetetrahydrofolate--tRNA-(uracil-5-)-methyltransferase TrmFO (Methylorubrum populi (strain ATCC BAA-705 / NCIMB 13946 / BJ001) (Methylobacterium populi)).